The primary structure comprises 657 residues: C4-dicarboxylate transport sensor protein DctS (657 aa).

The Cytoplasmic segment spans residues 1-26; it reads MRDTTGGPAGAEVWTVPGLLGARKLD. The helical transmembrane segment at 27 to 51 threads the bilayer; the sequence is LLALIPLVAIVALMTLVGALLFAVA. Topologically, residues 52 to 252 are periplasmic; that stretch reads QSDANRARAK…AYDAPDAFGN (201 aa). The helical transmembrane segment at 253–273 threads the bilayer; that stretch reads AALLAAIGALSVFAVLAMVVL. Topologically, residues 274-657 are cytoplasmic; sequence HRNALRRRMA…LPVPQEGAPA (384 aa). The 73-residue stretch at 289–361 folds into the PAS domain; that stretch reads AEMAFRRAME…ARQRQLIEGQ (73 aa). The PAC domain occupies 365 to 417; that stretch reads QAFETRFRRSDGSEIEVQVFEAPLIDAGGRHRGWMGSVIDITQAKQAARLARA. Positions 407-422 are inter-domain linker; it reads QAKQAARLARAQDESL. One can recognise a Histidine kinase domain in the interval 437–652; that stretch reads TLAHELNQPL…VFTVTLPVPQ (216 aa). At His-440 the chain carries Phosphohistidine; by autocatalysis.

The protein localises to the cell inner membrane. The enzyme catalyses ATP + protein L-histidine = ADP + protein N-phospho-L-histidine.. Functionally, member of the two-component regulatory system DctS/DctR involved in the transport of C4-dicarboxylates. DctS functions as a membrane-associated protein kinase that phosphorylates DctR in response to environmental signals. The protein is C4-dicarboxylate transport sensor protein DctS (dctS) of Rhodobacter capsulatus (Rhodopseudomonas capsulata).